Consider the following 213-residue polypeptide: Protein DMP3 (213 aa).

The tract at residues 1-27 (MSSPSSLTQRNPTSSQEQSESVPQLRR) is disordered. 4 consecutive transmembrane segments (helical) span residues 45 to 65 (LANL…PVFT), 74 to 94 (TQVL…LSSF), 136 to 156 (IRII…AVAL), and 176 to 196 (VLDI…LVFP).

It belongs to the plant DMP1 protein family. In terms of tissue distribution, expressed in leaves, siliques and roots (e.g. root hairs).

The protein resides in the endoplasmic reticulum membrane. In terms of biological role, involved in membrane remodeling. The polypeptide is Protein DMP3 (Arabidopsis thaliana (Mouse-ear cress)).